We begin with the raw amino-acid sequence, 377 residues long: Alanine racemase (377 aa).

Lysine 37 acts as the Proton acceptor; specific for D-alanine in catalysis. Lysine 37 is modified (N6-(pyridoxal phosphate)lysine). Arginine 135 serves as a coordination point for substrate. Tyrosine 271 functions as the Proton acceptor; specific for L-alanine in the catalytic mechanism. Residue methionine 319 coordinates substrate.

It belongs to the alanine racemase family. The cofactor is pyridoxal 5'-phosphate.

The enzyme catalyses L-alanine = D-alanine. Its pathway is amino-acid biosynthesis; D-alanine biosynthesis; D-alanine from L-alanine: step 1/1. Functionally, catalyzes the interconversion of L-alanine and D-alanine. May also act on other amino acids. The sequence is that of Alanine racemase (alr) from Helicobacter acinonychis (strain Sheeba).